Consider the following 603-residue polypeptide: Bud site selection protein 8 (603 aa).

A compositionally biased stretch (acidic residues) spans Met-1–Asp-10. 3 disordered regions span residues Met-1–Ser-25, Ala-83–Ser-150, and Ala-190–Glu-212. Residues Met-1–Asn-515 are Extracellular-facing. Composition is skewed to low complexity over residues Ser-11 to Ser-25 and Ser-84 to Ser-95. Residues Asn-92, Asn-110, Asn-211, Asn-240, Asn-271, and Asn-333 are each glycosylated (N-linked (GlcNAc...) asparagine). The segment covering Ile-96–Pro-115 has biased composition (polar residues). A disordered region spans residues Ala-286–Glu-479. Over residues Pro-325–Ser-335 the composition is skewed to low complexity. Residues Ser-336–Ser-350 are compositionally biased toward basic and acidic residues. N-linked (GlcNAc...) asparagine glycans are attached at residues Asn-396 and Asn-423. Polar residues predominate over residues Lys-439–Ile-452. The span at Lys-463–Glu-479 shows a compositional bias: basic and acidic residues. A helical membrane pass occupies residues Ile-516–Ser-536. The Cytoplasmic portion of the chain corresponds to Ser-537–Cys-577. A helical membrane pass occupies residues Leu-578–Val-598. At Gly-599 to Glu-603 the chain is on the extracellular side.

This sequence belongs to the BUD8/9 family. Interacts with RAX1 RAX2 at the proximal or distal pole in unbudded cells. In terms of processing, N- and O-glycosylated.

Its subcellular location is the cell membrane. The protein resides in the bud tip. Functionally, involved in positioning the distal bud pole signal. The chain is Bud site selection protein 8 from Saccharomyces cerevisiae (strain ATCC 204508 / S288c) (Baker's yeast).